Consider the following 309-residue polypeptide: Protein FdhE (309 aa).

It belongs to the FdhE family.

Its subcellular location is the cytoplasm. Necessary for formate dehydrogenase activity. This is Protein FdhE from Escherichia coli (strain K12 / MC4100 / BW2952).